The following is a 582-amino-acid chain: Threonine--tRNA ligase (582 aa).

The catalytic stretch occupies residues 185–478 (DHRKLGKELE…LTEQYGGAFP (294 aa)). Zn(2+)-binding residues include C278, H329, and H455.

The protein belongs to the class-II aminoacyl-tRNA synthetase family. As to quaternary structure, homodimer. Zn(2+) serves as cofactor.

It localises to the cytoplasm. The enzyme catalyses tRNA(Thr) + L-threonine + ATP = L-threonyl-tRNA(Thr) + AMP + diphosphate + H(+). Functionally, catalyzes the attachment of threonine to tRNA(Thr) in a two-step reaction: L-threonine is first activated by ATP to form Thr-AMP and then transferred to the acceptor end of tRNA(Thr). Also edits incorrectly charged L-seryl-tRNA(Thr). In Dehalococcoides mccartyi (strain CBDB1), this protein is Threonine--tRNA ligase.